Reading from the N-terminus, the 538-residue chain is Transmembrane protein 266 (538 aa).

Topologically, residues 1-102 are cytoplasmic; it reads MALVTSFNMA…VFLLSASLNS (102 aa). Residues 103-123 traverse the membrane as a helical segment; it reads FLVACVILVVILLTLELLIDT. At 124–130 the chain is on the extracellular side; sequence KLLQFSN. The chain crosses the membrane as a helical span at residues 131–151; sequence AFQFAGVIHWISLVILSVFFS. Residues 152–169 are Cytoplasmic-facing; it reads ETVLRIVVLGIWDYIENK. Residues 170–190 traverse the membrane as a helical segment; the sequence is IEVFDGAVIILSLAPMVASTV. Topologically, residues 191 to 199 are extracellular; sequence ANGPRSPWD. Residues 200 to 220 traverse the membrane as a helical segment; sequence AISLIIMFRIWRVKRVIDAYV. Over 221 to 538 the chain is Cytoplasmic; the sequence is LPVKLEMEMV…EPKLHTVPEA (318 aa). A coiled-coil region spans residues 232 to 278; that stretch reads QQYEKAKAIQDEQLERLTQICQEQGFEIRQLRAHLAQQDLDLAAERE. Disordered stretches follow at residues 380–435 and 453–483; these read NSTC…PLPL and SSLSKDPCPSHKALDPAPLAQPTPLGSVQTS. Over residues 381–396 the composition is skewed to low complexity; the sequence is STCASATSETTSHSTC. Positions 397-417 are enriched in polar residues; it reads GSVTRAQSASSQTLGSSTDCS. Over residues 425–434 the composition is skewed to low complexity; it reads PSKPRSSPLP.

In terms of assembly, homodimer; disulfide-linked. As to expression, in brain, present in the granule layer of the cerebellar cortex. Localizes on the post-synaptic side of glutamatergic mossy fibers and granule cells in the cerebellum (at protein level). In terms of tissue distribution, predominantly expressed in granule cells in cerebellum (at protein level).

It is found in the cell projection. Its subcellular location is the dendrite. The protein resides in the perikaryon. The protein localises to the cell membrane. Its function is as follows. Voltage-sensor protein present on the post-synaptic side of glutamatergic mossy fibers and granule cells in the cerebellum. Despite the presence of a voltage-sensor segment, does not form a functional ion channel and its precise role remains unclear. Undergoes both rapid and slow structural rearrangements in response to changes in voltage. Contains a zinc-binding site that can regulate the slow conformational transition. The protein is Transmembrane protein 266 of Mus musculus (Mouse).